Reading from the N-terminus, the 146-residue chain is Antiholin-like protein LrgA (146 aa).

The next 4 helical transmembrane spans lie at 7–29, 34–53, 65–87, and 97–119; these read YGFL…IAAI, IPAS…LKVI, LTSL…LGVM, and VILL…ILSL.

It belongs to the CidA/LrgA family. LrgA subfamily.

The protein resides in the cell membrane. Its function is as follows. Inhibits the expression or activity of extracellular murein hydrolases by interacting, possibly with LrgB, with the holin-like protein CidA. The LrgAB and CidA proteins may affect the proton motive force of the membrane. May be involved in programmed cell death (PCD), possibly triggering PCD in response to antibiotics and environmental stresses. This chain is Antiholin-like protein LrgA, found in Bacillus subtilis (strain 168).